Here is a 130-residue protein sequence, read N- to C-terminus: Protein YchQ (130 aa).

Residues 1 to 9 (MTSFSTLLS) are Periplasmic-facing. The helical transmembrane segment at 10–28 (VHLISIALSVGLLTLRFWL) threads the bilayer. The Cytoplasmic segment spans residues 29–39 (RYQKHPQAFAR). The helical transmembrane segment at 40–59 (WTRIVPPVVDTLLLLSGIAL) threads the bilayer. Topologically, residues 60 to 73 (MAKAHILPFSGQAQ) are periplasmic. The helical transmembrane segment at 74-93 (WLTEKLFGVIIYIVLGFIAL) threads the bilayer. The Cytoplasmic portion of the chain corresponds to 94-104 (DYRRMHSQQAR). A helical transmembrane segment spans residues 105 to 124 (IIAFPLALVVLYIIIKLATT). The Periplasmic portion of the chain corresponds to 125 to 130 (KVPLLG).

The protein belongs to the SirB2 family.

The protein localises to the cell inner membrane. The protein is Protein YchQ (ychQ) of Escherichia coli (strain K12).